Here is a 155-residue protein sequence, read N- to C-terminus: Microsomal glutathione S-transferase 1 (155 aa).

Residues 3–9 (DLTQVMD) lie on the Lumenal side of the membrane. A helical membrane pass occupies residues 10 to 33 (DEVFMAFASYATIILSKMMLMSTA). The Cytoplasmic portion of the chain corresponds to 34–62 (TAFYRLTRKVFANPEDCVAFGKGENAKKY). Arg-38 contributes to the glutathione binding site. An N6-acetyllysine mark is found at Lys-42, Lys-55, and Lys-60. A helical transmembrane segment spans residues 63 to 96 (LRTDDRVERVRRAHLNDLENIIPFLGIGLLYSLS). Residues Arg-73, Arg-74, His-76, and Glu-81 each contribute to the glutathione site. Topologically, residues 97–99 (GPD) are lumenal. A helical membrane pass occupies residues 100 to 123 (PSTAILHFRLFVGARIYHTIAYLT). Tyr-121 contributes to the glutathione binding site. Residues 124–128 (PLPQP) lie on the Cytoplasmic side of the membrane. The helical transmembrane segment at 129-148 (NRALSFFVGYGVTLSMAYRL) threads the bilayer. Residues 149–155 (LKSKLYL) lie on the Lumenal side of the membrane.

This sequence belongs to the MAPEG family. In terms of assembly, homotrimer; The trimer binds only one molecule of glutathione. As to expression, highly expressed in liver.

The protein localises to the endoplasmic reticulum membrane. Its subcellular location is the mitochondrion outer membrane. The enzyme catalyses RX + glutathione = an S-substituted glutathione + a halide anion + H(+). Its function is as follows. Conjugation of reduced glutathione to a wide number of exogenous and endogenous hydrophobic electrophiles. The polypeptide is Microsomal glutathione S-transferase 1 (MGST1) (Homo sapiens (Human)).